Reading from the N-terminus, the 128-residue chain is Fluoride-specific ion channel FluC (128 aa).

4 helical membrane passes run 5–25, 35–55, 67–87, and 96–116; these read IVAI…LGLA, LGTL…AVVF, LFVI…SVEV, and FGWA…LTAL. Na(+) is bound by residues glycine 75 and threonine 78.

This sequence belongs to the fluoride channel Fluc/FEX (TC 1.A.43) family.

It is found in the cell inner membrane. It catalyses the reaction fluoride(in) = fluoride(out). Na(+) is not transported, but it plays an essential structural role and its presence is essential for fluoride channel function. Fluoride-specific ion channel. Important for reducing fluoride concentration in the cell, thus reducing its toxicity. The protein is Fluoride-specific ion channel FluC of Burkholderia vietnamiensis (strain G4 / LMG 22486) (Burkholderia cepacia (strain R1808)).